The chain runs to 289 residues: 4-hydroxy-tetrahydrodipicolinate synthase (289 aa).

A pyruvate-binding site is contributed by T45. The active-site Proton donor/acceptor is the Y133. Residue K161 is the Schiff-base intermediate with substrate of the active site. I200 contributes to the pyruvate binding site.

Belongs to the DapA family. In terms of assembly, homotetramer; dimer of dimers.

It localises to the cytoplasm. It catalyses the reaction L-aspartate 4-semialdehyde + pyruvate = (2S,4S)-4-hydroxy-2,3,4,5-tetrahydrodipicolinate + H2O + H(+). It functions in the pathway amino-acid biosynthesis; L-lysine biosynthesis via DAP pathway; (S)-tetrahydrodipicolinate from L-aspartate: step 3/4. Catalyzes the condensation of (S)-aspartate-beta-semialdehyde [(S)-ASA] and pyruvate to 4-hydroxy-tetrahydrodipicolinate (HTPA). This Coxiella burnetii (strain Dugway 5J108-111) protein is 4-hydroxy-tetrahydrodipicolinate synthase.